Reading from the N-terminus, the 89-residue chain is Putative regulatory protein Dalk_1931 (89 aa).

It belongs to the RemA family.

This Desulfatibacillum aliphaticivorans protein is Putative regulatory protein Dalk_1931.